Reading from the N-terminus, the 275-residue chain is S-methyl-5'-thioadenosine phosphorylase (275 aa).

Residues Ser20, 62–63 (RH), and 95–96 (SA) contribute to the phosphate site. Disulfide bonds link Cys143–Cys210, Cys205–Cys266, and Cys264–Cys267. A substrate-binding site is contributed by Met195. Thr196 is a binding site for phosphate. Position 219–221 (219–221 (DYD)) interacts with substrate.

The protein belongs to the PNP/MTAP phosphorylase family. MTAP subfamily. As to quaternary structure, homohexamer. Dimer of a homotrimer.

The catalysed reaction is S-methyl-5'-thioadenosine + phosphate = 5-(methylsulfanyl)-alpha-D-ribose 1-phosphate + adenine. It participates in amino-acid biosynthesis; L-methionine biosynthesis via salvage pathway; S-methyl-5-thio-alpha-D-ribose 1-phosphate from S-methyl-5'-thioadenosine (phosphorylase route): step 1/1. Functionally, catalyzes the reversible phosphorylation of S-methyl-5'-thioadenosine (MTA) to adenine and 5-methylthioribose-1-phosphate. Involved in the breakdown of MTA, a major by-product of polyamine biosynthesis. Responsible for the first step in the methionine salvage pathway after MTA has been generated from S-adenosylmethionine. Has broad substrate specificity with 6-aminopurine nucleosides as preferred substrates. The protein is S-methyl-5'-thioadenosine phosphorylase of Aeropyrum pernix (strain ATCC 700893 / DSM 11879 / JCM 9820 / NBRC 100138 / K1).